The sequence spans 1161 residues: Type IV pilus biogenesis factor PilY1 (1161 aa).

The signal sequence occupies residues 1 to 30 (MKSVLHQIGKTSLAAALSGAVLLSAQTTHA). Ca(2+) is bound by residues aspartate 598, aspartate 600, asparagine 602, and aspartate 606. Positions 617 to 619 (RGD) are integrin-binding motif RGD. 5 residues coordinate Ca(2+): aspartate 849, asparagine 851, aspartate 853, valine 855, and aspartate 857. The segment at 1136-1161 (SGECLTVNPGPNTRGRQNWRPIEGKN) is disordered.

The protein belongs to the PilY1 family. In terms of assembly, interacts (via C-terminus) with host integrins alpha-V/beta-3 (ITGAV/ITGB3) and alpha-V/beta-5 (ITGAV/ITGB5).

It localises to the fimbrium. The protein resides in the membrane. It is found in the cytoplasm. The protein localises to the cytosol. In terms of biological role, involved in pilus assembly, twitching motility and adhesion to host cells. Primes type IV pili (T4P) assembly and is required for inclusion of minor pilins PilV, PilW and PilX to the surface pili. Stabilizes assembled pilus fibers likely by antagonizing retraction mediated by PilT. Calcium-binding and calcium release by PilY1 seem to be essential for twitching motility and for regulation of pilus retraction dynamics of PilT. This chain is Type IV pilus biogenesis factor PilY1, found in Pseudomonas aeruginosa (strain ATCC 15692 / DSM 22644 / CIP 104116 / JCM 14847 / LMG 12228 / 1C / PRS 101 / PAO1).